A 300-amino-acid chain; its full sequence is uncharacterized protein (300 aa).

Residues Met1–Ala19 are compositionally biased toward basic and acidic residues. The segment at Met1–Gln20 is disordered.

This is an uncharacterized protein from Orgyia pseudotsugata multicapsid polyhedrosis virus (OpMNPV).